The chain runs to 138 residues: Putative nickel-responsive regulator (138 aa).

Ni(2+)-binding residues include His-78, His-89, His-91, and Cys-97.

Belongs to the transcriptional regulatory CopG/NikR family. It depends on Ni(2+) as a cofactor.

Transcriptional regulator. In Pyrococcus furiosus (strain ATCC 43587 / DSM 3638 / JCM 8422 / Vc1), this protein is Putative nickel-responsive regulator.